The sequence spans 188 residues: dCTP deaminase (188 aa).

DCTP-binding positions include 111–116, 135–137, Gln-156, Tyr-170, and Gln-180; these read KSTYAR and TLE. Catalysis depends on Glu-137, which acts as the Proton donor/acceptor.

It belongs to the dCTP deaminase family. In terms of assembly, homotrimer.

It carries out the reaction dCTP + H2O + H(+) = dUTP + NH4(+). The protein operates within pyrimidine metabolism; dUMP biosynthesis; dUMP from dCTP (dUTP route): step 1/2. In terms of biological role, catalyzes the deamination of dCTP to dUTP. The sequence is that of dCTP deaminase from Pseudomonas aeruginosa (strain UCBPP-PA14).